A 156-amino-acid polypeptide reads, in one-letter code: Phytohormone-binding protein (156 aa).

The gibberellin A3 site is built by Q22, Q68, and T141.

Belongs to the BetVI family.

In terms of biological role, binds gibberellin A3 (GA3) in vitro. The sequence is that of Phytohormone-binding protein from Medicago truncatula (Barrel medic).